The primary structure comprises 503 residues: Arabinose import ATP-binding protein AraG 1 (503 aa).

ABC transporter domains lie at 5 to 240 (LRFD…MVGR) and 251 to 497 (RALG…LPQT). 37–44 (GENGAGKS) lines the ATP pocket.

It belongs to the ABC transporter superfamily. Arabinose importer (TC 3.A.1.2.2) family. The complex is composed of two ATP-binding proteins (AraG), two transmembrane proteins (AraH) and a solute-binding protein (AraF).

The protein resides in the cell inner membrane. It carries out the reaction L-arabinose(out) + ATP + H2O = L-arabinose(in) + ADP + phosphate + H(+). In terms of biological role, part of the ABC transporter complex AraFGH involved in arabinose import. Responsible for energy coupling to the transport system. The chain is Arabinose import ATP-binding protein AraG 1 from Burkholderia lata (strain ATCC 17760 / DSM 23089 / LMG 22485 / NCIMB 9086 / R18194 / 383).